Here is a 70-residue protein sequence, read N- to C-terminus: DNA gyrase inhibitor YacG (70 aa).

Zn(2+)-binding residues include Cys-9, Cys-12, Cys-28, and Cys-32. The interval 43 to 70 (ESRKIPGSSIDPESIVTTNNKQDNVDEQ) is disordered.

It belongs to the DNA gyrase inhibitor YacG family. Interacts with GyrB. Zn(2+) is required as a cofactor.

In terms of biological role, inhibits all the catalytic activities of DNA gyrase by preventing its interaction with DNA. Acts by binding directly to the C-terminal domain of GyrB, which probably disrupts DNA binding by the gyrase. In Legionella pneumophila (strain Corby), this protein is DNA gyrase inhibitor YacG.